The primary structure comprises 606 residues: Zinc metalloproteinase-disintegrin-like HF3 (606 aa).

A signal peptide spans M1–S20. A propeptide spanning residues I21 to A190 is cleaved from the precursor. The Peptidase M12B domain occupies K199 to P395. E202 lines the Ca(2+) pocket. The N-linked (GlcNAc...) asparagine glycan is linked to N259. D286 serves as a coordination point for Ca(2+). Cystine bridges form between C310–C390, C350–C374, and C352–C357. N-linked (GlcNAc...) asparagine glycosylation occurs at N313. H335 lines the Zn(2+) pocket. Residue E336 is part of the active site. The Zn(2+) site is built by H339 and H345. N-linked (GlcNAc...) asparagine glycosylation is present at N373. Residues C390, N393, V405, N408, L410, E412, E415, and D418 each contribute to the Ca(2+) site. The Disintegrin domain maps to P403–N489. Disulfide bonds link C406-C435, C417-C430, C419-C425, C429-C452, C443-C449, C448-C474, C461-C481, C468-C500, C493-C505, C512-C562, C527-C569, C540-C550, C557-C594, and C588-C599. Residues E467 to D469 carry the D/ECD-tripeptide motif. Positions 469, 472, and 484 each coordinate Ca(2+). N519 carries N-linked (GlcNAc...) asparagine glycosylation. N-linked (GlcNAc...) asparagine glycosylation is present at N584.

The protein belongs to the venom metalloproteinase (M12B) family. P-III subfamily. P-IIIa sub-subfamily. Monomer. Zn(2+) is required as a cofactor. Expressed by the venom gland.

It localises to the secreted. Functionally, the metalloproteinase-disintegrin-like HF3 is a potent hemorrhagic toxin that activates macrophages for phagocytosis through integrin alpha-M/beta-2 (ITGAM/ITGB2). It inhibits collagen-induced platelet aggregation. This protein shows cleavage specificity for substrate for leucine at P1' position, followed by hydrophobic residues in P2'. The chain is Zinc metalloproteinase-disintegrin-like HF3 from Bothrops jararaca (Jararaca).